The following is a 220-amino-acid chain: Protein CREG1 (220 aa).

Positions M1–G31 are cleaved as a signal peptide. 3 N-linked (GlcNAc...) asparagine glycosylation sites follow: N160, N193, and N216.

It belongs to the CREG family. Homodimer. Interacts with IGF2R; the interaction is dependent on glycosylation. N-glycosylated.

The protein resides in the secreted. Its function is as follows. May contribute to the transcriptional control of cell growth and differentiation. Antagonizes transcriptional activation and cellular transformation by the adenovirus E1A protein. The transcriptional control activity of cell growth requires interaction with IGF2R. This Homo sapiens (Human) protein is Protein CREG1 (CREG1).